The primary structure comprises 535 residues: PAC-1 interacting and coiled-coil domain-containing protein 1 (535 aa).

A disordered region spans residues 1 to 67 (MIITTPRRAN…KQTPPRSPVI (67 aa)). Residues 36–57 (SSTTPSSIGSSSSSSSSYASST) are compositionally biased toward low complexity. Coiled coils occupy residues 109–172 (KLQY…RDLS) and 198–242 (SLMK…RQSL). 2 disordered regions span residues 254–277 (NESE…NDEE) and 503–535 (TCRP…HTHN). Positions 503-525 (TCRPTTTLISSTQPAQRSVSVEK) are enriched in polar residues. Over residues 526-535 (NNNNNVHTHN) the composition is skewed to low complexity.

It belongs to the CCDC85 family. Interacts with pac-1 and jac-1.

The protein resides in the cell junction. It localises to the adherens junction. Functionally, linker protein which helps to recruit the Rho GTPase-activating protein, pac-1, to adherens junctions. The polypeptide is PAC-1 interacting and coiled-coil domain-containing protein 1 (Caenorhabditis elegans).